A 207-amino-acid chain; its full sequence is Protein GrpE (207 aa).

Composition is skewed to basic and acidic residues over residues 1–11 and 57–66; these read MEENRDVKNEE and DLVKNQEEEN. The segment at 1–66 is disordered; sequence MEENRDVKNE…DLVKNQEEEN (66 aa).

It belongs to the GrpE family. Homodimer.

The protein localises to the cytoplasm. In terms of biological role, participates actively in the response to hyperosmotic and heat shock by preventing the aggregation of stress-denatured proteins, in association with DnaK and GrpE. It is the nucleotide exchange factor for DnaK and may function as a thermosensor. Unfolded proteins bind initially to DnaJ; upon interaction with the DnaJ-bound protein, DnaK hydrolyzes its bound ATP, resulting in the formation of a stable complex. GrpE releases ADP from DnaK; ATP binding to DnaK triggers the release of the substrate protein, thus completing the reaction cycle. Several rounds of ATP-dependent interactions between DnaJ, DnaK and GrpE are required for fully efficient folding. This chain is Protein GrpE, found in Clostridium beijerinckii (strain ATCC 51743 / NCIMB 8052) (Clostridium acetobutylicum).